Here is a 531-residue protein sequence, read N- to C-terminus: SWI/SNF-related matrix-associated actin-dependent regulator of chromatin subfamily D member 2 (531 aa).

Positions 20 to 85 are disordered; the sequence is AVAAALGAPP…MSPGSRMPMA (66 aa). Low complexity predominate over residues 34-45; that stretch reads PGMLPNPALRGP. Asymmetric dimethylarginine is present on residues Arg-81 and Arg-104. The interval 202–226 is disordered; sequence FSPSKADGDNSGTAGTPGGTPAADK. A Phosphoserine modification is found at Ser-203. A Phosphothreonine modification is found at Thr-217. A Glycyl lysine isopeptide (Lys-Gly) (interchain with G-Cter in SUMO2) cross-link involves residue Lys-226. The region spanning 306-383 is the SWIB/MDM2 domain; sequence HQPPQYKLDP…PMKLAGLLQH (78 aa).

It belongs to the SMARCD family. Component of the multiprotein chromatin-remodeling complexes SWI/SNF: SWI/SNF-A (BAF), SWI/SNF-B (PBAF) and related complexes. The canonical complex contains a catalytic subunit (either SMARCA4/BRG1/BAF190A or SMARCA2/BRM/BAF190B), and at least SMARCE1, ACTL6A/BAF53, SMARCC1/BAF155, SMARCC2/BAF170, and SMARCB1/SNF5/BAF47. Other subunits specific to each of the complexes may also be present permitting several possible combinations developmentally and tissue specific. Component of the BAF complex, which includes at least actin (ACTB), ARID1A/BAF250A, ARID1B/BAF250B, SMARCA2/BRM, SMARCA4/BRG1, ACTL6A/BAF53, ACTL6B/BAF53B, SMARCE1/BAF57, SMARCC1/BAF155, SMARCC2/BAF170, SMARCB1/SNF5/INI1, and one or more SMARCD1/BAF60A, SMARCD2/BAF60B, or SMARCD3/BAF60C. In muscle cells, the BAF complex also contains DPF3. Component of the SWI/SNF-B (PBAF) chromatin remodeling complex, at least composed of SMARCA4/BRG1, SMARCB1/BAF47/SNF5, ACTL6A/BAF53A or ACTL6B/BAF53B, SMARCE1/BAF57, SMARCD1/BAF60A, SMARCD2/BAF60B, perhaps SMARCD3/BAF60C, SMARCC1/BAF155, SMARCC2/BAF170, PBRM1/BAF180, ARID2/BAF200 and actin (ACTB). Interacts with UNKL. Interacts with CEBPE. Post-translationally, ubiquitinated through a signaling process involving RAC1 and the RING finger protein UNKL.

Its subcellular location is the nucleus. Involved in transcriptional activation and repression of select genes by chromatin remodeling (alteration of DNA-nucleosome topology). Component of SWI/SNF chromatin remodeling complexes that carry out key enzymatic activities, changing chromatin structure by altering DNA-histone contacts within a nucleosome in an ATP-dependent manner. Critical regulator of myeloid differentiation, controlling granulocytopoiesis and the expression of genes involved in neutrophil granule formation. In Rattus norvegicus (Rat), this protein is SWI/SNF-related matrix-associated actin-dependent regulator of chromatin subfamily D member 2 (Smarcd2).